The primary structure comprises 492 residues: 2-succinylbenzoate--CoA ligase (492 aa).

Belongs to the ATP-dependent AMP-binding enzyme family. MenE subfamily.

It catalyses the reaction 2-succinylbenzoate + ATP + CoA = 2-succinylbenzoyl-CoA + AMP + diphosphate. It functions in the pathway quinol/quinone metabolism; 1,4-dihydroxy-2-naphthoate biosynthesis; 1,4-dihydroxy-2-naphthoate from chorismate: step 5/7. The protein operates within quinol/quinone metabolism; menaquinone biosynthesis. Its function is as follows. Converts 2-succinylbenzoate (OSB) to 2-succinylbenzoyl-CoA (OSB-CoA). The chain is 2-succinylbenzoate--CoA ligase from Staphylococcus aureus (strain bovine RF122 / ET3-1).